Here is a 311-residue protein sequence, read N- to C-terminus: Methionyl-tRNA formyltransferase (311 aa).

110–113 (SLLP) is a (6S)-5,6,7,8-tetrahydrofolate binding site.

It belongs to the Fmt family.

It catalyses the reaction L-methionyl-tRNA(fMet) + (6R)-10-formyltetrahydrofolate = N-formyl-L-methionyl-tRNA(fMet) + (6S)-5,6,7,8-tetrahydrofolate + H(+). Functionally, attaches a formyl group to the free amino group of methionyl-tRNA(fMet). The formyl group appears to play a dual role in the initiator identity of N-formylmethionyl-tRNA by promoting its recognition by IF2 and preventing the misappropriation of this tRNA by the elongation apparatus. The polypeptide is Methionyl-tRNA formyltransferase (Streptococcus pneumoniae (strain JJA)).